Consider the following 123-residue polypeptide: MIQEQTMLNVADNSGARRVMCIKVLGGSHRRYAGVGDIIKITIKEAIPRGKVKKGDVLKAVVVRTKKGVRRPDGSVIRFDGNACVILNNNSEQPIGTRIFGPVTRELRNEKFMKIISLAPEVL.

It belongs to the universal ribosomal protein uL14 family. Part of the 50S ribosomal subunit. Forms a cluster with proteins L3 and L19. In the 70S ribosome, L14 and L19 interact and together make contacts with the 16S rRNA in bridges B5 and B8.

Its function is as follows. Binds to 23S rRNA. Forms part of two intersubunit bridges in the 70S ribosome. The protein is Large ribosomal subunit protein uL14 of Pectobacterium atrosepticum (strain SCRI 1043 / ATCC BAA-672) (Erwinia carotovora subsp. atroseptica).